The following is a 59-amino-acid chain: Large ribosomal subunit protein bL32 (59 aa).

Residues 1–16 are compositionally biased toward basic residues; it reads MAVPKRKVSPHRRGNR. The segment at 1–20 is disordered; the sequence is MAVPKRKVSPHRRGNRRAHD.

Belongs to the bacterial ribosomal protein bL32 family.

The sequence is that of Large ribosomal subunit protein bL32 from Erythrobacter litoralis (strain HTCC2594).